A 441-amino-acid chain; its full sequence is Histidinol dehydrogenase homolog (441 aa).

A Zn(2+)-binding site is contributed by His266. Active-site proton acceptor residues include Glu334 and His335. His427 serves as a coordination point for Zn(2+).

It belongs to the histidinol dehydrogenase family. Requires Zn(2+) as cofactor.

In Cereibacter sphaeroides (strain ATCC 17023 / DSM 158 / JCM 6121 / CCUG 31486 / LMG 2827 / NBRC 12203 / NCIMB 8253 / ATH 2.4.1.) (Rhodobacter sphaeroides), this protein is Histidinol dehydrogenase homolog.